The chain runs to 461 residues: Cysteine--tRNA ligase (461 aa).

Cys-28 lines the Zn(2+) pocket. The 'HIGH' region signature appears at 30-40 (ITVYDLCHIGH). Positions 209, 234, and 238 each coordinate Zn(2+). A 'KMSKS' region motif is present at residues 266 to 270 (KMSKS). An ATP-binding site is contributed by Lys-269.

Belongs to the class-I aminoacyl-tRNA synthetase family. As to quaternary structure, monomer. Zn(2+) serves as cofactor.

It is found in the cytoplasm. It catalyses the reaction tRNA(Cys) + L-cysteine + ATP = L-cysteinyl-tRNA(Cys) + AMP + diphosphate. The protein is Cysteine--tRNA ligase of Escherichia coli O17:K52:H18 (strain UMN026 / ExPEC).